The sequence spans 334 residues: Oligopeptide transport ATP-binding protein OppF (334 aa).

One can recognise an ABC transporter domain in the interval 12–265; that stretch reads LEIADLKVHF…PLHPYTRALM (254 aa). 57–64 lines the ATP pocket; it reads GESGCGKS.

It belongs to the ABC transporter superfamily. The complex is composed of two ATP-binding proteins (OppD and OppF), two transmembrane proteins (OppB and OppC) and a solute-binding protein (OppA or MppA).

The protein localises to the cell inner membrane. The enzyme catalyses a [peptide](out) + ATP + H2O = a [peptide](in) + ADP + phosphate + H(+). It catalyses the reaction L-alanyl-gamma-D-glutamyl-meso-2,6-diaminopimelate(out) + ATP + H2O = L-alanyl-gamma-D-glutamyl-meso-2,6-diaminopimelate(in) + ADP + phosphate + H(+). Part of the ABC transporter complex OppABCDF involved in the uptake of oligopeptides and of the ABC transporter complex MppA-OppBCDF involved in the uptake of the cell wall murein tripeptide L-alanyl-gamma-D-glutamyl-meso-diaminopimelate. Probably responsible for energy coupling to the transport system. Plays an important nutritional role and is involved in the recycling of cell wall peptides. In Escherichia coli (strain K12), this protein is Oligopeptide transport ATP-binding protein OppF (oppF).